Here is a 91-residue protein sequence, read N- to C-terminus: Small ribosomal subunit protein uS19 (91 aa).

The protein belongs to the universal ribosomal protein uS19 family.

Functionally, protein S19 forms a complex with S13 that binds strongly to the 16S ribosomal RNA. The chain is Small ribosomal subunit protein uS19 from Azotobacter vinelandii (strain DJ / ATCC BAA-1303).